The chain runs to 310 residues: ADP-L-glycero-D-manno-heptose-6-epimerase (310 aa).

Residues 10 to 11 (FI), 31 to 32 (DN), Lys38, Lys53, 75 to 79 (EGACS), and Asn92 each bind NADP(+). Tyr140 functions as the Proton acceptor in the catalytic mechanism. Lys144 contacts NADP(+). Asn169 serves as a coordination point for substrate. Positions 170 and 178 each coordinate NADP(+). Residue Lys178 is the Proton acceptor of the active site. Substrate is bound by residues Ser180, His187, 201 to 204 (FEGS), Arg209, and Tyr272.

The protein belongs to the NAD(P)-dependent epimerase/dehydratase family. HldD subfamily. As to quaternary structure, homopentamer. It depends on NADP(+) as a cofactor.

The catalysed reaction is ADP-D-glycero-beta-D-manno-heptose = ADP-L-glycero-beta-D-manno-heptose. It functions in the pathway nucleotide-sugar biosynthesis; ADP-L-glycero-beta-D-manno-heptose biosynthesis; ADP-L-glycero-beta-D-manno-heptose from D-glycero-beta-D-manno-heptose 7-phosphate: step 4/4. Functionally, catalyzes the interconversion between ADP-D-glycero-beta-D-manno-heptose and ADP-L-glycero-beta-D-manno-heptose via an epimerization at carbon 6 of the heptose. The chain is ADP-L-glycero-D-manno-heptose-6-epimerase from Citrobacter koseri (strain ATCC BAA-895 / CDC 4225-83 / SGSC4696).